A 351-amino-acid polypeptide reads, in one-letter code: Protein RecA (351 aa).

68 to 75 contacts ATP; it reads GPESSGKT.

The protein belongs to the RecA family.

Its subcellular location is the cytoplasm. Can catalyze the hydrolysis of ATP in the presence of single-stranded DNA, the ATP-dependent uptake of single-stranded DNA by duplex DNA, and the ATP-dependent hybridization of homologous single-stranded DNAs. It interacts with LexA causing its activation and leading to its autocatalytic cleavage. This is Protein RecA from Chloroflexus aurantiacus (strain ATCC 29364 / DSM 637 / Y-400-fl).